A 331-amino-acid polypeptide reads, in one-letter code: tRNA (guanine-N(1)-)-methyltransferase (331 aa).

Composition is skewed to low complexity over residues 77 to 99 (GSDTTARSGSTAATSASAQQATR) and 107 to 134 (AQPGDAGQGTAAPDYARTGGTPGAGRAA). A disordered region spans residues 77–137 (GSDTTARSGS…PGAGRAASSR (61 aa)). S-adenosyl-L-methionine-binding positions include G169 and 193-198 (LGDYVL). Positions 312–331 (WQRCSPAPSEQAPEGARDMA) are disordered.

Belongs to the RNA methyltransferase TrmD family. Homodimer.

The protein localises to the cytoplasm. The catalysed reaction is guanosine(37) in tRNA + S-adenosyl-L-methionine = N(1)-methylguanosine(37) in tRNA + S-adenosyl-L-homocysteine + H(+). Functionally, specifically methylates guanosine-37 in various tRNAs. This Kocuria rhizophila (strain ATCC 9341 / DSM 348 / NBRC 103217 / DC2201) protein is tRNA (guanine-N(1)-)-methyltransferase.